Reading from the N-terminus, the 75-residue chain is MQCVCLCVFVLLLAGCVTSQEEVEVDCYCVYFKYDCPEDYIESNRYNNQCQIRHKCCVPPPKYFFFVFPKGYRMP.

The N-terminal stretch at 1-19 (MQCVCLCVFVLLLAGCVTS) is a signal peptide.

In terms of tissue distribution, nacreous layer of shell (at protein level).

It is found in the secreted. This is an uncharacterized protein from Margaritifera margaritifera (Freshwater pearl mussel).